The sequence spans 373 residues: NADPH-dependent 3-keto-steroid reductase HSD3B3 (373 aa).

NADP(+) contacts are provided by residues 10 to 15 (GAGGFL), Y155, and K159. K159 serves as the catalytic Proton donor. A helical membrane pass occupies residues 288–308 (VALLYWFGFLLETVSFLLRPV).

The protein belongs to the 3-beta-HSD family. As to expression, high levels in adrenal gland, kidney and male liver (at protein level). Low levels in female liver (at protein level). Expressed in ovaries (at protein level).

It is found in the endoplasmic reticulum membrane. The protein resides in the mitochondrion membrane. The catalysed reaction is a 3beta-hydroxysteroid + NADP(+) = a 3-oxosteroid + NADPH + H(+). It catalyses the reaction 5alpha-androstane-3beta,17beta-diol + NADP(+) = 17beta-hydroxy-5alpha-androstan-3-one + NADPH + H(+). The protein operates within steroid metabolism. Its function is as follows. Responsible for the reduction of the oxo group on the C-3 of 5alpha-androstane steroids. Catalyzes the conversion of dihydrotestosterone to its inactive form 5alpha-androstanediol, that does not bind androgen receptor/AR. Does not function as an isomerase. This Mesocricetus auratus (Golden hamster) protein is NADPH-dependent 3-keto-steroid reductase HSD3B3 (HSD3B3).